The primary structure comprises 388 residues: Xylose isomerase (388 aa).

Active-site residues include histidine 54 and aspartate 57. Mg(2+)-binding residues include glutamate 181, glutamate 217, histidine 220, aspartate 245, aspartate 255, aspartate 257, and aspartate 287.

Belongs to the xylose isomerase family. In terms of assembly, homotetramer. Mg(2+) serves as cofactor.

It is found in the cytoplasm. The catalysed reaction is alpha-D-xylose = alpha-D-xylulofuranose. The chain is Xylose isomerase from Streptomyces avermitilis (strain ATCC 31267 / DSM 46492 / JCM 5070 / NBRC 14893 / NCIMB 12804 / NRRL 8165 / MA-4680).